A 708-amino-acid chain; its full sequence is ATP-dependent DNA helicase Hel308 (708 aa).

The short motif at 1 to 29 (MSIDDLKLPSNVIDIIKNRGIKKLNPPQT) is the Q motif element. Residues Q28 and 46-53 (SPTGSGKT) contribute to the ATP site. Residues 33-196 (KKGLLDGNRL…WLGAEPVATN (164 aa)) form the Helicase ATP-binding domain. Residues 145-148 (DELH) carry the DEAH box motif. The Helicase C-terminal domain occupies 229–435 (HGDDAIIAYT…ERAFYTFLLG (207 aa)).

It belongs to the helicase family. Hel308 subfamily. In terms of assembly, monomer.

The catalysed reaction is Couples ATP hydrolysis with the unwinding of duplex DNA by translocating in the 3'-5' direction.. It carries out the reaction ATP + H2O = ADP + phosphate + H(+). DNA-dependent ATPase and 3'-5' DNA helicase that may be involved in repair of stalled replication forks. This Saccharolobus solfataricus (strain ATCC 35092 / DSM 1617 / JCM 11322 / P2) (Sulfolobus solfataricus) protein is ATP-dependent DNA helicase Hel308.